Here is a 532-residue protein sequence, read N- to C-terminus: Muscarinic acetylcholine receptor M5 (532 aa).

At 1–29 (MEGDSYGNATTINGTPVNHQPLERHRLWE) the chain is on the extracellular side. An N-linked (GlcNAc...) asparagine glycan is attached at Asn8. A helical membrane pass occupies residues 30–53 (VITIAAVTAVVSLITIVGNVLVMI). Residues 54–66 (SFKVNSQLKTVNN) are Cytoplasmic-facing. Residues 67–87 (YYLLSLACADLIIGIFSMNLY) traverse the membrane as a helical segment. The Extracellular portion of the chain corresponds to 88-104 (TTYILMGRWALGSLACD). Residues 105–126 (LWLALDYVASNASVMNLLVISF) traverse the membrane as a helical segment. Over 127-146 (DRYFSITRPLTYRAKRTPKR) the chain is Cytoplasmic. A helical transmembrane segment spans residues 147–169 (AGIMIGLAWLISFILWAPAILCW). Over 170–191 (QYLVGKRTVPPDECQIQFLSEP) the chain is Extracellular. Residues 192-214 (TITFGTAIAAFYIPVSVMTILYC) form a helical membrane-spanning segment. Topologically, residues 215–443 (RIYRETEKRT…LVKERKAAQT (229 aa)) are cytoplasmic. The segment at 263–294 (QRERNQASRSSSHRSTSITGKPSQATGPSTNW) is disordered. Residues 270–279 (SRSSSHRSTS) show a composition bias toward low complexity. The span at 280–294 (ITGKPSQATGPSTNW) shows a compositional bias: polar residues. The helical transmembrane segment at 444-464 (LSAILLAFIITWTPYNIMVLV) threads the bilayer. At 465–478 (STFCDKCVPVALWH) the chain is on the extracellular side. A helical transmembrane segment spans residues 479-498 (LGYWLCYVNSTVNPICYALC). The Cytoplasmic portion of the chain corresponds to 499–532 (NRTFRKTFKMLLLCQWKKKKVEEKLYWQGNSKLP). Phosphothreonine is present on residues Thr501 and Thr505.

Belongs to the G-protein coupled receptor 1 family. Muscarinic acetylcholine receptor subfamily. CHRM5 sub-subfamily.

It localises to the cell membrane. Its subcellular location is the postsynaptic cell membrane. The muscarinic acetylcholine receptor mediates various cellular responses, including inhibition of adenylate cyclase, breakdown of phosphoinositides and modulation of potassium channels through the action of G proteins. Primary transducing effect is Pi turnover. The sequence is that of Muscarinic acetylcholine receptor M5 (CHRM5) from Saimiri boliviensis boliviensis (Bolivian squirrel monkey).